The sequence spans 434 residues: Isocitrate lyase (434 aa).

91-93 lines the substrate pocket; it reads SGW. Aspartate 157 provides a ligand contact to Mg(2+). The Proton acceptor role is filled by cysteine 195. Residues 196 to 197, arginine 232, 317 to 321, and threonine 351 contribute to the substrate site; these read GH and NCSPS.

The protein belongs to the isocitrate lyase/PEP mutase superfamily. Isocitrate lyase family. Homotetramer. Requires Mg(2+) as cofactor.

The enzyme catalyses D-threo-isocitrate = glyoxylate + succinate. Its pathway is carbohydrate metabolism; glyoxylate cycle; (S)-malate from isocitrate: step 1/2. Functionally, involved in the metabolic adaptation in response to environmental changes. Catalyzes the reversible formation of succinate and glyoxylate from isocitrate, a key step of the glyoxylate cycle, which operates as an anaplerotic route for replenishing the tricarboxylic acid cycle during growth on fatty acid substrates. The sequence is that of Isocitrate lyase (aceA) from Escherichia coli O6:H1 (strain CFT073 / ATCC 700928 / UPEC).